The following is a 105-amino-acid chain: Cell division topological specificity factor (105 aa).

It belongs to the MinE family.

Its function is as follows. Prevents the cell division inhibition by proteins MinC and MinD at internal division sites while permitting inhibition at polar sites. This ensures cell division at the proper site by restricting the formation of a division septum at the midpoint of the long axis of the cell. This Prochlorococcus marinus (strain MIT 9515) protein is Cell division topological specificity factor.